Here is a 216-residue protein sequence, read N- to C-terminus: Uridine kinase (216 aa).

16 to 23 is an ATP binding site; that stretch reads GASASGKS.

The protein belongs to the uridine kinase family.

It localises to the cytoplasm. The enzyme catalyses uridine + ATP = UMP + ADP + H(+). It catalyses the reaction cytidine + ATP = CMP + ADP + H(+). It functions in the pathway pyrimidine metabolism; CTP biosynthesis via salvage pathway; CTP from cytidine: step 1/3. It participates in pyrimidine metabolism; UMP biosynthesis via salvage pathway; UMP from uridine: step 1/1. This Mannheimia succiniciproducens (strain KCTC 0769BP / MBEL55E) protein is Uridine kinase.